The primary structure comprises 289 residues: Digeranylgeranylglyceryl phosphate synthase (289 aa).

8 helical membrane-spanning segments follow: residues 17–37 (CLMA…ILTS), 50–70 (LFSS…GNAI), 106–126 (FALG…IALF), 141–161 (TPLL…LFGA), 163–183 (VFGL…ALAI), 221–241 (LIGF…MLGL), 243–263 (YLYL…QLLA), and 269–289 (KSSK…IAGV).

Belongs to the UbiA prenyltransferase family. DGGGP synthase subfamily. The cofactor is Mg(2+).

It localises to the cell membrane. It carries out the reaction sn-3-O-(geranylgeranyl)glycerol 1-phosphate + (2E,6E,10E)-geranylgeranyl diphosphate = 2,3-bis-O-(geranylgeranyl)-sn-glycerol 1-phosphate + diphosphate. The protein operates within membrane lipid metabolism; glycerophospholipid metabolism. Functionally, prenyltransferase that catalyzes the transfer of the geranylgeranyl moiety of geranylgeranyl diphosphate (GGPP) to the C2 hydroxyl of (S)-3-O-geranylgeranylglyceryl phosphate (GGGP). This reaction is the second ether-bond-formation step in the biosynthesis of archaeal membrane lipids. The polypeptide is Digeranylgeranylglyceryl phosphate synthase (Methanosarcina barkeri (strain Fusaro / DSM 804)).